A 389-amino-acid polypeptide reads, in one-letter code: 5-hydroxytryptamine receptor 1B (389 aa).

Positions 1 to 27 (MEETNTHCAPPPPAGSQTGVSQANLSS) are disordered. Over 1-45 (MEETNTHCAPPPPAGSQTGVSQANLSSAPPNCSTEGYIYQDSIAL) the chain is Extracellular. Over residues 15-27 (GSQTGVSQANLSS) the composition is skewed to polar residues. 2 N-linked (GlcNAc...) asparagine glycosylation sites follow: Asn-24 and Asn-31. The helical transmembrane segment at 46–71 (PWKVLLILVLALFTLATTLSNAFVIA) threads the bilayer. Residues 72 to 85 (TVYRTRKLHTPANY) are Cytoplasmic-facing. The helical transmembrane segment at 86–110 (LIASLAVTDLLVSILVMPISTMYTV) threads the bilayer. Residues 111-118 (TGRWTLGQ) lie on the Extracellular side of the membrane. A helical transmembrane segment spans residues 119–144 (VVCDFWLSSDITCCTASILHLCVIAL). An intrachain disulfide couples Cys-121 to Cys-198. Ergotamine-binding residues include Asp-128 and Thr-133. The DRY motif; important for ligand-induced conformation changes and signaling signature appears at 145–147 (DRY). Residues 145-164 (DRYWAITDAVEYSAKRTPKR) are Cytoplasmic-facing. Residues 165–183 (AAVMIALVWVFSISISLPP) form a helical membrane-spanning segment. Over 184 to 204 (FFWRQAKAEEEVSDCRVNTDH) the chain is Extracellular. Val-200 provides a ligand contact to ergotamine. The chain crosses the membrane as a helical span at residues 205–228 (MLYTVYSTVGAFYFPTLLLIALYG). Residues 229–314 (RIYVEARSRI…AARERKATKT (86 aa)) lie on the Cytoplasmic side of the membrane. Residues 258-271 (DSPGSTSSVTSVNS) show a composition bias toward polar residues. The tract at residues 258–281 (DSPGSTSSVTSVNSRAPDVPSESG) is disordered. The helical transmembrane segment at 315 to 336 (LGIILGAFIVCWLPFFIISLVM) threads the bilayer. At 337 to 346 (PICKDACWFH) the chain is on the extracellular side. A helical transmembrane segment spans residues 347–369 (LAIFDFFTWLGYLNSLINPIIYT). Residues 364–368 (NPIIY) carry the NPxxY motif; important for ligand-induced conformation changes and signaling motif. Residues 370–389 (MSNEDFKQAFHKLIRFKCTG) are Cytoplasmic-facing. Cys-387 is lipidated: S-palmitoyl cysteine.

The protein belongs to the G-protein coupled receptor 1 family. Homodimer. Heterodimer with HTR1D. Phosphorylated. Desensitization of the receptor may be mediated by its phosphorylation. In terms of processing, palmitoylated.

The protein resides in the cell membrane. In terms of biological role, G-protein coupled receptor for 5-hydroxytryptamine (serotonin). Also functions as a receptor for ergot alkaloid derivatives, various anxiolytic and antidepressant drugs and other psychoactive substances, such as lysergic acid diethylamide (LSD). Ligand binding causes a conformation change that triggers signaling via guanine nucleotide-binding proteins (G proteins) and modulates the activity of downstream effectors, such as adenylate cyclase. HTR1B is coupled to G(i)/G(o) G alpha proteins and mediates inhibitory neurotransmission by inhibiting adenylate cyclase activity. Arrestin family members inhibit signaling via G proteins and mediate activation of alternative signaling pathways. Regulates the release of 5-hydroxytryptamine, dopamine and acetylcholine in the brain, and thereby affects neural activity, nociceptive processing, pain perception, mood and behavior. Besides, plays a role in vasoconstriction of cerebral arteries. The protein is 5-hydroxytryptamine receptor 1B (HTR1B) of Felis catus (Cat).